A 502-amino-acid chain; its full sequence is Probable cytosol aminopeptidase (502 aa).

2 residues coordinate Mn(2+): K265 and D270. K277 is a catalytic residue. Residues D288, D347, and E349 each contribute to the Mn(2+) site. Residue R351 is part of the active site.

It belongs to the peptidase M17 family. Mn(2+) is required as a cofactor.

Its subcellular location is the cytoplasm. It carries out the reaction Release of an N-terminal amino acid, Xaa-|-Yaa-, in which Xaa is preferably Leu, but may be other amino acids including Pro although not Arg or Lys, and Yaa may be Pro. Amino acid amides and methyl esters are also readily hydrolyzed, but rates on arylamides are exceedingly low.. The enzyme catalyses Release of an N-terminal amino acid, preferentially leucine, but not glutamic or aspartic acids.. In terms of biological role, presumably involved in the processing and regular turnover of intracellular proteins. Catalyzes the removal of unsubstituted N-terminal amino acids from various peptides. In Rickettsia bellii (strain RML369-C), this protein is Probable cytosol aminopeptidase.